We begin with the raw amino-acid sequence, 284 residues long: UPF0276 protein PA14_21580 (284 aa).

The protein belongs to the UPF0276 family.

This chain is UPF0276 protein PA14_21580, found in Pseudomonas aeruginosa (strain UCBPP-PA14).